A 215-amino-acid chain; its full sequence is NAD(P)H-quinone oxidoreductase subunit I (215 aa).

4Fe-4S ferredoxin-type domains lie at 55 to 84 and 95 to 124; these read GRIH…VDWV and RNYS…MTEE. Residues cysteine 64, cysteine 67, cysteine 70, cysteine 74, cysteine 104, cysteine 107, cysteine 110, and cysteine 114 each coordinate [4Fe-4S] cluster. The span at 169–180 shows a compositional bias: basic and acidic residues; that stretch reads MDPHGVASDRPR. Residues 169–215 are disordered; sequence MDPHGVASDRPRAGQLPAQVLETLTPPAKPTAKNDGQSSSEAKEGDA.

It belongs to the complex I 23 kDa subunit family. As to quaternary structure, NDH-1 is composed of at least 11 different subunits. [4Fe-4S] cluster serves as cofactor.

Its subcellular location is the cellular thylakoid membrane. It carries out the reaction a plastoquinone + NADH + (n+1) H(+)(in) = a plastoquinol + NAD(+) + n H(+)(out). It catalyses the reaction a plastoquinone + NADPH + (n+1) H(+)(in) = a plastoquinol + NADP(+) + n H(+)(out). Its function is as follows. NDH-1 shuttles electrons from an unknown electron donor, via FMN and iron-sulfur (Fe-S) centers, to quinones in the respiratory and/or the photosynthetic chain. The immediate electron acceptor for the enzyme in this species is believed to be plastoquinone. Couples the redox reaction to proton translocation, and thus conserves the redox energy in a proton gradient. This is NAD(P)H-quinone oxidoreductase subunit I from Synechococcus sp. (strain CC9605).